The sequence spans 227 residues: NADH-quinone oxidoreductase subunit C (227 aa).

It belongs to the complex I 30 kDa subunit family. NDH-1 is composed of 14 different subunits. Subunits NuoB, C, D, E, F, and G constitute the peripheral sector of the complex.

It localises to the cell inner membrane. It catalyses the reaction a quinone + NADH + 5 H(+)(in) = a quinol + NAD(+) + 4 H(+)(out). Functionally, NDH-1 shuttles electrons from NADH, via FMN and iron-sulfur (Fe-S) centers, to quinones in the respiratory chain. The immediate electron acceptor for the enzyme in this species is believed to be ubiquinone. Couples the redox reaction to proton translocation (for every two electrons transferred, four hydrogen ions are translocated across the cytoplasmic membrane), and thus conserves the redox energy in a proton gradient. In Coxiella burnetii (strain Dugway 5J108-111), this protein is NADH-quinone oxidoreductase subunit C.